Consider the following 613-residue polypeptide: Putative two-component response regulator ARR21 (613 aa).

The Response regulatory domain maps to 17 to 131 (NVMVVDDDHV…DLTKIYQFAL (115 aa)). Asp-68 bears the 4-aspartylphosphate mark. The span at 178-195 (KSDSRTVNSTNGSCVSTD) shows a compositional bias: polar residues. Positions 178–223 (KSDSRTVNSTNGSCVSTDGSRKNRKRKPNGGPSDDGESMSQPAKKK) are disordered. A Nuclear localization signal motif is present at residues 221-224 (KKKK). The segment at residues 224–274 (KIQWTDSLHDLFLQAIRHIGLDKAVPKKILAFMSVPYLTRENVASHLQKYR) is a DNA-binding region (myb-like GARP).

Belongs to the ARR family. Type-B subfamily. Binds the target DNA as a monomer. In terms of processing, two-component system major event consists of a His-to-Asp phosphorelay between a sensor histidine kinase (HK) and a response regulator (RR). In plants, the His-to-Asp phosphorelay involves an additional intermediate named Histidine-containing phosphotransfer protein (HPt). This multistep phosphorelay consists of a His-Asp-His-Asp sequential transfer of a phosphate group between first a His and an Asp of the HK protein, followed by the transfer to a conserved His of the HPt protein and finally the transfer to an Asp in the receiver domain of the RR protein. In terms of tissue distribution, mainly expressed in siliques. Also found in germinating seedlings, stems, flowers and roots, but not in rosette leaves.

It is found in the nucleus. In terms of biological role, putative transcriptional activator that binds specifically to the DNA sequence 5'-[AG]GATT-3'. Functions as a response regulator involved in His-to-Asp phosphorelay signal transduction system. Phosphorylation of the Asp residue in the receiver domain activates the ability of the protein to promote the transcription of target genes. Could directly activate some type-A response regulators in response to cytokinins. The protein is Putative two-component response regulator ARR21 (ARR21) of Arabidopsis thaliana (Mouse-ear cress).